The following is a 319-amino-acid chain: Acetyl-coenzyme A carboxylase carboxyl transferase subunit alpha (319 aa).

The CoA carboxyltransferase C-terminal domain maps to 43–296 (LKQKSVELTQ…KTQLLLDLVE (254 aa)).

This sequence belongs to the AccA family. In terms of assembly, acetyl-CoA carboxylase is a heterohexamer composed of biotin carboxyl carrier protein (AccB), biotin carboxylase (AccC) and two subunits each of ACCase subunit alpha (AccA) and ACCase subunit beta (AccD).

It is found in the cytoplasm. The enzyme catalyses N(6)-carboxybiotinyl-L-lysyl-[protein] + acetyl-CoA = N(6)-biotinyl-L-lysyl-[protein] + malonyl-CoA. It participates in lipid metabolism; malonyl-CoA biosynthesis; malonyl-CoA from acetyl-CoA: step 1/1. Functionally, component of the acetyl coenzyme A carboxylase (ACC) complex. First, biotin carboxylase catalyzes the carboxylation of biotin on its carrier protein (BCCP) and then the CO(2) group is transferred by the carboxyltransferase to acetyl-CoA to form malonyl-CoA. This chain is Acetyl-coenzyme A carboxylase carboxyl transferase subunit alpha, found in Blochmanniella floridana.